Here is a 328-residue protein sequence, read N- to C-terminus: POU domain, class 5, transcription factor 2 (328 aa).

A disordered region spans residues 1–25 (MAGHRPSNHFCPLPGSGGGGPRGPM). The POU-specific domain maps to 118–192 (DISGILKELQ…LLKKWLKEVE (75 aa)). Residues 210 to 269 (GKWRRASRERRIGNSLEKFFQRCPKPTPQQISHIAGCLQLQKDVVRVWFYNRSKMGSRPT) constitute a DNA-binding region (homeobox).

This sequence belongs to the POU transcription factor family. Class-5 subfamily. Expressed in skeletal and cardiac muscles, brain, heart and lung. Little or no detectable expression found in pancreas, kidney, liver or placenta.

Its subcellular location is the nucleus. Functionally, transcription factor that binds preferentially to the octamer motif (5'-ATGTTAAT-3'). May exert a regulatory function in meiotic events that are required for terminal differentiation of male germ cell. The chain is POU domain, class 5, transcription factor 2 (POU5F2) from Homo sapiens (Human).